Consider the following 124-residue polypeptide: Cytochrome b5-like protein (124 aa).

Residues 5 to 22 (YLLILIIIYVIKIICRYF) traverse the membrane as a helical segment. In terms of domain architecture, Cytochrome b5 heme-binding spans 49–124 (NQINQVNQVN…ILSKYKITEK (76 aa)). Heme is bound by residues His-84 and His-108.

Belongs to the cytochrome b5 family.

Its subcellular location is the membrane. Its function is as follows. Membrane bound hemoprotein which function as an electron carrier for several membrane bound oxygenases. This is Cytochrome b5-like protein from Acanthamoeba polyphaga (Amoeba).